Consider the following 460-residue polypeptide: ATP synthase subunit beta (460 aa).

An ATP-binding site is contributed by 150–157 (GGAGVGKT).

The protein belongs to the ATPase alpha/beta chains family. F-type ATPases have 2 components, CF(1) - the catalytic core - and CF(0) - the membrane proton channel. CF(1) has five subunits: alpha(3), beta(3), gamma(1), delta(1), epsilon(1). CF(0) has three main subunits: a(1), b(2) and c(9-12). The alpha and beta chains form an alternating ring which encloses part of the gamma chain. CF(1) is attached to CF(0) by a central stalk formed by the gamma and epsilon chains, while a peripheral stalk is formed by the delta and b chains.

The protein localises to the cell inner membrane. The catalysed reaction is ATP + H2O + 4 H(+)(in) = ADP + phosphate + 5 H(+)(out). Functionally, produces ATP from ADP in the presence of a proton gradient across the membrane. The catalytic sites are hosted primarily by the beta subunits. The protein is ATP synthase subunit beta of Erwinia tasmaniensis (strain DSM 17950 / CFBP 7177 / CIP 109463 / NCPPB 4357 / Et1/99).